A 267-amino-acid chain; its full sequence is Small ribosomal subunit protein uS3 (267 aa).

One can recognise a KH type-2 domain in the interval 43-111 (IRKEMSKDLE…QVQLNIFEVK (69 aa)). Residues 216-267 (FEEQQAQQNNRPGRRGGDRRPRRGNRSAAPQAAEAPKAEAPAEAAPAAETKE) are disordered. The span at 241-267 (RSAAPQAAEAPKAEAPAEAAPAAETKE) shows a compositional bias: low complexity.

It belongs to the universal ribosomal protein uS3 family. As to quaternary structure, part of the 30S ribosomal subunit. Forms a tight complex with proteins S10 and S14.

In terms of biological role, binds the lower part of the 30S subunit head. Binds mRNA in the 70S ribosome, positioning it for translation. This chain is Small ribosomal subunit protein uS3, found in Bifidobacterium longum (strain DJO10A).